Here is a 467-residue protein sequence, read N- to C-terminus: Glutamate--tRNA ligase (467 aa).

A 'HIGH' region motif is present at residues 9–19 (PSPTGYLHIGG). Positions 237–241 (KLSKR) match the 'KMSKS' region motif. ATP is bound at residue K240.

This sequence belongs to the class-I aminoacyl-tRNA synthetase family. Glutamate--tRNA ligase type 1 subfamily. As to quaternary structure, monomer.

The protein localises to the cytoplasm. The enzyme catalyses tRNA(Glu) + L-glutamate + ATP = L-glutamyl-tRNA(Glu) + AMP + diphosphate. Its function is as follows. Catalyzes the attachment of glutamate to tRNA(Glu) in a two-step reaction: glutamate is first activated by ATP to form Glu-AMP and then transferred to the acceptor end of tRNA(Glu). This is Glutamate--tRNA ligase from Xanthomonas oryzae pv. oryzae (strain MAFF 311018).